The primary structure comprises 147 residues: Phospholipase A2 SSD387 (147 aa).

The N-terminal stretch at Met-1–Ala-19 is a signal peptide. Positions Ile-20–Arg-28 are excised as a propeptide. Intrachain disulfides connect Cys-55/Cys-71, Cys-70/Cys-130, Cys-77/Cys-123, Cys-86/Cys-116, and Cys-109/Cys-121. 2 residues coordinate Ca(2+): Gly-56 and Gly-58. His-74 is an active-site residue. Asp-75 serves as a coordination point for Ca(2+). Asp-124 is a catalytic residue.

The cofactor is Ca(2+). Expressed by the venom gland.

It localises to the secreted. The enzyme catalyses a 1,2-diacyl-sn-glycero-3-phosphocholine + H2O = a 1-acyl-sn-glycero-3-phosphocholine + a fatty acid + H(+). In terms of biological role, PLA2 catalyzes the calcium-dependent hydrolysis of the 2-acyl groups in 3-sn-phosphoglycerides. In Scolopendra dehaani (Thai centipede), this protein is Phospholipase A2 SSD387.